Here is a 225-residue protein sequence, read N- to C-terminus: MMNTAEFKVIFNQYDELDTLLLEAITQLKIDISAEQRRKLLLYLDKLLFWNKAYNLTAIKQPKEALIKHVIDCLAILPHLKPGKLLDIGTGAGLPGVIVAICEPERPITVLDSNQKKIRFIRQSISELQVTNVTPVASRIENFNPDEGDKFAVVTSRAFASLTDFVEAAAPRLAQGGWLQAMKGLIPEPQELQVLQDQWQIDNIALSVPYLHETRHLTELHKIVI.

Residues G89, L94, 140–141, and R157 contribute to the S-adenosyl-L-methionine site; that span reads IE.

It belongs to the methyltransferase superfamily. RNA methyltransferase RsmG family.

The protein resides in the cytoplasm. The catalysed reaction is guanosine(527) in 16S rRNA + S-adenosyl-L-methionine = N(7)-methylguanosine(527) in 16S rRNA + S-adenosyl-L-homocysteine. Its function is as follows. Specifically methylates the N7 position of guanine in position 527 of 16S rRNA. The protein is Ribosomal RNA small subunit methyltransferase G of Psychrobacter sp. (strain PRwf-1).